A 399-amino-acid chain; its full sequence is Insertion element IS116 uncharacterized 44.8 kDa protein (399 aa).

It belongs to the transposase IS1111A/IS1328/IS1533 family.

This Streptomyces clavuligerus protein is Insertion element IS116 uncharacterized 44.8 kDa protein.